The sequence spans 648 residues: Leucine-rich repeat transmembrane protein FLRT3 (648 aa).

Residues 1-28 (MSTETWNLFVAWAQLLLLFRISPQYVNA) form the signal peptide. The Extracellular portion of the chain corresponds to 29–527 (KPCPSVCRCD…KEPYKNSSLP (499 aa)). An LRRNT domain is found at 30 to 62 (PCPSVCRCDGGFIYCNDRDLTSIPSGIPDDATT). Cystine bridges form between Cys-31-Cys-37 and Cys-35-Cys-44. LRR repeat units follow at residues 58-82 (DDAT…LRGL), 83-105 (DKVE…LPKN), 107-126 (KELH…ALSQ), 127-152 (IPSI…AFRD), 154-179 (IFLR…TIEE), 181-197 (RLDD…SLQD), 198-223 (LTNL…VFMN), 225-246 (INLT…NLPG), 247-269 (TNLR…AFAD), and 270-293 (LTQL…IFDD). Asn-226 carries N-linked (GlcNAc...) asparagine glycosylation. In terms of domain architecture, LRRCT spans 305–356 (NPWYCGCKMKWVRDWLQSLPSKVNVRGLMCQAPERVRGMTIKDLNKELFDCK). A disulfide bridge connects residues Cys-309 and Cys-334. In terms of domain architecture, Fibronectin type-III spans 409 to 503 (KIITIQVKSI…VCIETETAPL (95 aa)). Residues 528-548 (LAAIIGGAVALVAITLLALVC) traverse the membrane as a helical segment. Residues 549-648 (WYVHRNGSLF…GIPDSDHSHS (100 aa)) are Cytoplasmic-facing. A compositionally biased stretch (low complexity) spans 624–633 (NSHSESSSNR). Positions 624–648 (NSHSESSSNRSYRDSGIPDSDHSHS) are disordered.

As to quaternary structure, interacts with fgfr1 and fgfr4. Interacts with rnd1, cdh1 and pcdh8. Interacts (via extracellular domain) with unc5b and unc5d (via extracellular domain). N-glycosylated. Post-translationally, proteolytic cleavage in the juxtamembrane region gives rise to a soluble ectodomain. Cleavage is probably effected by a metalloprotease.

It is found in the cell membrane. The protein resides in the endoplasmic reticulum membrane. It localises to the cell junction. The protein localises to the focal adhesion. Its subcellular location is the secreted. It is found in the cell projection. The protein resides in the axon. It localises to the growth cone membrane. In terms of biological role, functions in cell-cell adhesion, cell migration and axon guidance, exerting an attractive or repulsive role depending on its interaction partners. Modulates cadherin-dependent cell-cell adhesion and cell sorting. Plays a role in the spatial organization of brain neurons. Plays a role in vascular development. Plays a role in cell-cell adhesion via its interaction with latrophilins that are expressed at the surface of adjacent cells. Mediates axon attraction towards cells expressing ntn1. mediates axon growth cone collapse and plays a repulsive role in neuron guidance via its interaction with unc-5 family members. Plays a role in the regulation of the density of glutamaergic synapses. Plays a role in signaling cascades downstream of fgfr1, and possibly also other fgfr family members. Plays a role in embryonic morphogenesis, but not in embryonic patterning. The protein is Leucine-rich repeat transmembrane protein FLRT3 of Xenopus tropicalis (Western clawed frog).